Here is a 55-residue protein sequence, read N- to C-terminus: UPF0391 membrane protein RALTA_A0099 (55 aa).

2 helical membrane passes run 5-25 (ALVFFVIALIAAIFGFGGIAA) and 30-50 (IAKILFFIFLVVALVAAVMGL).

Belongs to the UPF0391 family.

Its subcellular location is the cell membrane. In Cupriavidus taiwanensis (strain DSM 17343 / BCRC 17206 / CCUG 44338 / CIP 107171 / LMG 19424 / R1) (Ralstonia taiwanensis (strain LMG 19424)), this protein is UPF0391 membrane protein RALTA_A0099.